The following is a 325-amino-acid chain: Elongation factor P--(R)-beta-lysine ligase (325 aa).

76 to 78 (SPE) serves as a coordination point for substrate. ATP contacts are provided by residues 100–102 (RNE) and Asn-109. Position 118 (Tyr-118) interacts with substrate. 244–245 (EL) serves as a coordination point for ATP. Glu-251 contributes to the substrate binding site. Gly-300 provides a ligand contact to ATP.

It belongs to the class-II aminoacyl-tRNA synthetase family. EpmA subfamily. In terms of assembly, homodimer.

The catalysed reaction is D-beta-lysine + L-lysyl-[protein] + ATP = N(6)-((3R)-3,6-diaminohexanoyl)-L-lysyl-[protein] + AMP + diphosphate + H(+). Functionally, with EpmB is involved in the beta-lysylation step of the post-translational modification of translation elongation factor P (EF-P) on 'Lys-34'. Catalyzes the ATP-dependent activation of (R)-beta-lysine produced by EpmB, forming a lysyl-adenylate, from which the beta-lysyl moiety is then transferred to the epsilon-amino group of EF-P 'Lys-34'. The chain is Elongation factor P--(R)-beta-lysine ligase from Salmonella dublin (strain CT_02021853).